A 944-amino-acid polypeptide reads, in one-letter code: Protein translocase subunit SecA (944 aa).

Residues glutamine 77, glycine 95–threonine 99, and aspartate 484 each bind ATP. Positions glutamate 920 to glycine 944 are disordered. Basic and acidic residues predominate over residues proline 933–glycine 944.

The protein belongs to the SecA family. Monomer and homodimer. Part of the essential Sec protein translocation apparatus which comprises SecA, SecYEG and auxiliary proteins SecDF. Other proteins may also be involved.

The protein localises to the cell membrane. It is found in the cytoplasm. The enzyme catalyses ATP + H2O + cellular proteinSide 1 = ADP + phosphate + cellular proteinSide 2.. In terms of biological role, part of the Sec protein translocase complex. Interacts with the SecYEG preprotein conducting channel. Has a central role in coupling the hydrolysis of ATP to the transfer of proteins into and across the cell membrane, serving as an ATP-driven molecular motor driving the stepwise translocation of polypeptide chains across the membrane. This chain is Protein translocase subunit SecA, found in Mycoplasma capricolum subsp. capricolum (strain California kid / ATCC 27343 / NCTC 10154).